Reading from the N-terminus, the 413-residue chain is Hemolin (413 aa).

An N-terminal signal peptide occupies residues 1–18 (MVSKSIVALAACVAMCVA). Ig-like C2-type domains are found at residues 25–112 (PVLK…HIIS), 121–215 (PTTF…LVGY), 233–322 (PMYV…VKLT), and 327–411 (PRFT…TLVI). 4 cysteine pairs are disulfide-bonded: cysteine 46–cysteine 97, cysteine 141–cysteine 199, cysteine 252–cysteine 305, and cysteine 349–cysteine 395. N-linked (GlcNAc...) asparagine glycosylation is present at asparagine 283.

Belongs to the hemolin family. As to expression, hemolymph.

The protein resides in the secreted. In terms of biological role, insect-immune protein with antimicrobial activity. Forms a protein complex at the bacterial surface. Can inhibit hemocyte aggregation. The chain is Hemolin from Manduca sexta (Tobacco hawkmoth).